The sequence spans 848 residues: Coiled-coil domain-containing protein 110 (848 aa).

The disordered stretch occupies residues 41–62 (SEGVKESGGNEPEYGCASEPEN). Residues 442–794 (LQNYLKESLQ…LSDKVSSQNN (353 aa)) are a coiled coil. The residue at position 620 (Ser-620) is a Phosphoserine.

It localises to the nucleus. The polypeptide is Coiled-coil domain-containing protein 110 (Ccdc110) (Mus musculus (Mouse)).